A 129-amino-acid polypeptide reads, in one-letter code: Iron-sulfur cluster assembly 1 homolog, mitochondrial (129 aa).

A mitochondrion-targeting transit peptide spans 1–12 (MSASIARATVRA). Residues C57, C121, and C123 each contribute to the Fe cation site.

Belongs to the HesB/IscA family.

The protein localises to the mitochondrion. Its function is as follows. Involved in the maturation of mitochondrial 4Fe-4S proteins functioning late in the iron-sulfur cluster assembly pathway. Probably involved in the binding of an intermediate of Fe/S cluster assembly. The protein is Iron-sulfur cluster assembly 1 homolog, mitochondrial (isca1) of Danio rerio (Zebrafish).